Consider the following 130-residue polypeptide: UPF0102 protein Cthe_0758 (130 aa).

This sequence belongs to the UPF0102 family.

The protein is UPF0102 protein Cthe_0758 of Acetivibrio thermocellus (strain ATCC 27405 / DSM 1237 / JCM 9322 / NBRC 103400 / NCIMB 10682 / NRRL B-4536 / VPI 7372) (Clostridium thermocellum).